A 441-amino-acid chain; its full sequence is uncharacterized protein (441 aa).

78–85 (GPRQAGKT) provides a ligand contact to ATP.

This is an uncharacterized protein from Mycobacterium bovis (strain ATCC BAA-935 / AF2122/97).